We begin with the raw amino-acid sequence, 445 residues long: Mannan endo-1,4-beta-mannosidase 2 (445 aa).

An N-terminal signal peptide occupies residues Met-1–Gly-27. Substrate is bound at residue Trp-110. Asn-181 is a glycosylation site (N-linked (GlcNAc...) asparagine). Asn-226 contributes to the substrate binding site. The active-site Proton donor is Glu-227. A substrate-binding site is contributed by Tyr-309. Catalysis depends on Glu-349, which acts as the Nucleophile. Trp-391 is a substrate binding site.

The protein belongs to the glycosyl hydrolase 5 (cellulase A) family. Expressed in stems and seeds, and at lower levels in roots and leaves.

Its subcellular location is the secreted. It carries out the reaction Random hydrolysis of (1-&gt;4)-beta-D-mannosidic linkages in mannans, galactomannans and glucomannans.. The chain is Mannan endo-1,4-beta-mannosidase 2 (MAN2) from Oryza sativa subsp. japonica (Rice).